The chain runs to 441 residues: Nucleoprotein (441 aa).

A Phosphoserine; by host modification is found at S5. In terms of domain architecture, CoV N NTD spans 14–136 (VPLSLYAPLR…QLPSVVEIVE (123 aa)). Positions 16–146 (LSLYAPLRVT…PNTPPASRAN (131 aa)) are RNA-binding. Disordered regions lie at residues 131-219 (VVEI…VTSR) and 231-278 (KSLG…LKDI). S143 carries the phosphoserine; by host modification. Positions 143–215 (SRANSRSRSR…NRNQSNDRGG (73 aa)) are enriched in low complexity. 2 stretches are compositionally biased toward basic and acidic residues: residues 238 to 255 (NPDR…KSDN) and 269 to 278 (TSKERDLKDI). The 117-residue stretch at 266 to 382 (SRATSKERDL…AFKTGNAKLQ (117 aa)) folds into the CoV N CTD domain. The dimerization stretch occupies residues 277–379 (DIPEWRRIPK…QVDAFKTGNA (103 aa)).

Belongs to the alphacoronavirus nucleocapsid protein family. As to quaternary structure, homooligomer. Both monomeric and oligomeric forms interact with RNA. Interacts with protein M. Interacts with NSP3; this interaction serves to tether the genome to the newly translated replicase-transcriptase complex at a very early stage of infection. Interacts with host RSAD2; this interaction inhibits viral replication. Post-translationally, ADP-ribosylated. The ADP-ribosylation is retained in the virion during infection. In terms of processing, phosphorylated on serine and threonine residues.

The protein localises to the virion. The protein resides in the host endoplasmic reticulum-Golgi intermediate compartment. Its subcellular location is the host Golgi apparatus. Packages the positive strand viral genome RNA into a helical ribonucleocapsid (RNP) and plays a fundamental role during virion assembly through its interactions with the viral genome and membrane protein M. Plays an important role in enhancing the efficiency of subgenomic viral RNA transcription as well as viral replication. The chain is Nucleoprotein from Porcine epidemic diarrhea virus (strain CV777) (PEDV).